We begin with the raw amino-acid sequence, 580 residues long: Ran GTPase-activating protein 1 (580 aa).

7 LRR repeats span residues 48–71, 111–134, 141–168, 207–230, 235–258, 292–315, and 320–343; these read YEGL…AIAE, GAQL…GFEA, CFTL…ALTE, IGTL…ALAE, NSLL…AMAE, LHKL…SLAE, and KSDL…QVQE. The segment at 356–429 is disordered; the sequence is SLSDDEDEDD…PPKLPVDAST (74 aa). A compositionally biased stretch (acidic residues) spans 358-399; that stretch reads SDDEDEDDDDDDEDDDDDEDDENDDEEVEEEEEEVEEEEGGD.

Belongs to the RNA1 family. As to quaternary structure, homodimer. Identified in a complex with RANBP2 and the ubiquitin-conjugating enzyme E2 (UBE2I). In terms of processing, may be sumoylated.

It is found in the cytoplasm. It localises to the nucleus. The protein resides in the nucleoplasm. The protein localises to the nucleus envelope. Its subcellular location is the chromosome. It is found in the centromere. It localises to the kinetochore. The protein resides in the cytoskeleton. The protein localises to the spindle. In terms of biological role, GTPase activator for RAN, converting it to the GDP-bound state. Converts cytoplasmic GTP-bound RAN to GDP-bound RAN, which is required for RAN-mediated nuclear import and export. The sequence is that of Ran GTPase-activating protein 1 (rangap1) from Xenopus laevis (African clawed frog).